The sequence spans 459 residues: Bifunctional protein GlmU (459 aa).

The tract at residues 1–229 (MSNFAIILAA…FDESLGVNDR (229 aa)) is pyrophosphorylase. UDP-N-acetyl-alpha-D-glucosamine is bound by residues 8-11 (LAAG), lysine 22, glutamine 72, and 77-78 (GT). Aspartate 102 provides a ligand contact to Mg(2+). The UDP-N-acetyl-alpha-D-glucosamine site is built by glycine 139, glutamate 154, asparagine 169, and asparagine 227. Residue asparagine 227 participates in Mg(2+) binding. The interval 230 to 250 (VALATAESVMRRRINHKHMVN) is linker. An N-acetyltransferase region spans residues 251–459 (GVSFVNPEAT…TRLPHHPKNQ (209 aa)). Positions 332 and 350 each coordinate UDP-N-acetyl-alpha-D-glucosamine. Histidine 362 (proton acceptor) is an active-site residue. Residues tyrosine 365 and asparagine 376 each coordinate UDP-N-acetyl-alpha-D-glucosamine. Residues alanine 379, 385-386 (NY), serine 404, alanine 422, and arginine 439 each bind acetyl-CoA.

It in the N-terminal section; belongs to the N-acetylglucosamine-1-phosphate uridyltransferase family. This sequence in the C-terminal section; belongs to the transferase hexapeptide repeat family. In terms of assembly, homotrimer. Requires Mg(2+) as cofactor.

The protein resides in the cytoplasm. It catalyses the reaction alpha-D-glucosamine 1-phosphate + acetyl-CoA = N-acetyl-alpha-D-glucosamine 1-phosphate + CoA + H(+). The catalysed reaction is N-acetyl-alpha-D-glucosamine 1-phosphate + UTP + H(+) = UDP-N-acetyl-alpha-D-glucosamine + diphosphate. The protein operates within nucleotide-sugar biosynthesis; UDP-N-acetyl-alpha-D-glucosamine biosynthesis; N-acetyl-alpha-D-glucosamine 1-phosphate from alpha-D-glucosamine 6-phosphate (route II): step 2/2. It functions in the pathway nucleotide-sugar biosynthesis; UDP-N-acetyl-alpha-D-glucosamine biosynthesis; UDP-N-acetyl-alpha-D-glucosamine from N-acetyl-alpha-D-glucosamine 1-phosphate: step 1/1. Its pathway is bacterial outer membrane biogenesis; LPS lipid A biosynthesis. Functionally, catalyzes the last two sequential reactions in the de novo biosynthetic pathway for UDP-N-acetylglucosamine (UDP-GlcNAc). The C-terminal domain catalyzes the transfer of acetyl group from acetyl coenzyme A to glucosamine-1-phosphate (GlcN-1-P) to produce N-acetylglucosamine-1-phosphate (GlcNAc-1-P), which is converted into UDP-GlcNAc by the transfer of uridine 5-monophosphate (from uridine 5-triphosphate), a reaction catalyzed by the N-terminal domain. This Streptococcus pneumoniae (strain 70585) protein is Bifunctional protein GlmU.